The sequence spans 352 residues: Keratocan (352 aa).

The first 20 residues, 1–20 (MASTICFILWVVFVTDTVWT), serve as a signal peptide directing secretion. Residues 33–71 (EDWTMHDFDCPRECFCPPSFPTALYCENRGLKEIPAIPS) form the LRRNT domain. 2 disulfides stabilise this stretch: cysteine 42–cysteine 48 and cysteine 46–cysteine 58. 8 LRR repeats span residues 72–93 (RIWYLYLENNLIETIPEKPFEN), 96–117 (QLRWINLNKNKITNYGIEKGAL), 122–142 (KLLFLFLEDNELEEVPSPLPR), 143–164 (SLEQLQLARNKVSRIPQGTFSN), 167–180 (NLTLLDLQHNKLLD), 193–214 (NLMQLNMAKNALRNMPPRLPAN), 215–235 (TMQVFLDNNSIEGIPENYFNV), and 238–258 (KVAFLRLNHNKLSDAGLPSSG). An N-linked (GlcNAc...) (keratan sulfate) asparagine glycan is attached at asparagine 93. Residue asparagine 167 is glycosylated (N-linked (GlcNAc...) (keratan sulfate) asparagine). Asparagine 222 carries N-linked (GlcNAc...) asparagine glycosylation. Asparagine 260 carries N-linked (GlcNAc...) (keratan sulfate) asparagine glycosylation. 2 LRR repeats span residues 263–282 (SILDLQLSHNQLTKVPKISA) and 283–304 (HLQHLHLDHNKIRNVNVSVICP). Asparagine 298 carries an N-linked (GlcNAc...) asparagine glycan. Cysteine 303 and cysteine 343 are disulfide-bonded.

It belongs to the small leucine-rich proteoglycan (SLRP) family. SLRP class II subfamily. Binds three long, highly sulfated keratan sulfate chains in the cornea but short, non-sulfated poly(N-acetyllactosamine) chains in other tissues. Post-translationally, the N-terminus is blocked. Abundant in cornea and sclera but also found in other tissues.

Its subcellular location is the secreted. It localises to the extracellular space. The protein localises to the extracellular matrix. Its function is as follows. May be important in developing and maintaining corneal transparency and for the structure of the stromal matrix. The sequence is that of Keratocan (KERA) from Bos taurus (Bovine).